The sequence spans 765 residues: 5-methyltetrahydropteroyltriglutamate--homocysteine methyltransferase 2 (765 aa).

5-methyltetrahydropteroyltri-L-glutamate contacts are provided by K18 and N116. L-homocysteine contacts are provided by residues 437-439 and E490; that span reads IGS. L-methionine is bound by residues 437–439 and E490; that span reads IGS. 5-methyltetrahydropteroyltri-L-glutamate is bound by residues D495, Y518, 521–522, and W567; that span reads RC. Residue D605 coordinates L-homocysteine. Residue D605 coordinates L-methionine. 5 residues coordinate Zn(2+): H647, C649, H658, D662, and E671. Catalysis depends on H701, which acts as the Proton donor. C733 is a binding site for Zn(2+).

It belongs to the vitamin-B12 independent methionine synthase family. It depends on Zn(2+) as a cofactor. In terms of tissue distribution, expressed in leaves, stems and siliques.

It localises to the cytoplasm. The protein resides in the cytosol. The enzyme catalyses 5-methyltetrahydropteroyltri-L-glutamate + L-homocysteine = tetrahydropteroyltri-L-glutamate + L-methionine. The protein operates within amino-acid biosynthesis; L-methionine biosynthesis via de novo pathway; L-methionine from L-homocysteine (MetE route): step 1/1. Its function is as follows. Catalyzes the transfer of a methyl group from 5-methyltetrahydrofolate to homocysteine resulting in methionine formation. This is 5-methyltetrahydropteroyltriglutamate--homocysteine methyltransferase 2 (MS2) from Arabidopsis thaliana (Mouse-ear cress).